A 317-amino-acid polypeptide reads, in one-letter code: Olfactory receptor 2B11 (317 aa).

At Met-1–Leu-29 the chain is on the extracellular side. The N-linked (GlcNAc...) asparagine glycan is linked to Asn-5. The helical transmembrane segment at Pro-30–Ser-53 threads the bilayer. Over Arg-54–Ser-61 the chain is Cytoplasmic. The helical transmembrane segment at Pro-62–Pro-83 threads the bilayer. The Extracellular segment spans residues Gln-84–Gln-104. Cysteines 101 and 193 form a disulfide. The chain crosses the membrane as a helical span at residues Tyr-105 to Leu-124. Topologically, residues Asp-125–Ala-143 are cytoplasmic. A helical membrane pass occupies residues Leu-144–Val-162. Residues Gln-163 to Asn-199 are Extracellular-facing. An N-linked (GlcNAc...) asparagine glycan is attached at Asn-199. A helical transmembrane segment spans residues Asp-200–Gly-223. Over Phe-224 to Lys-240 the chain is Cytoplasmic. A helical membrane pass occupies residues Ala-241–Tyr-263. Residues Leu-264 to Lys-276 lie on the Extracellular side of the membrane. The helical transmembrane segment at Phe-277–Leu-296 threads the bilayer. At Arg-297–Gly-317 the chain is on the cytoplasmic side.

Belongs to the G-protein coupled receptor 1 family.

It is found in the cell membrane. Functionally, odorant receptor. The protein is Olfactory receptor 2B11 (OR2B11) of Homo sapiens (Human).